The sequence spans 38 residues: Large ribosomal subunit protein bL36 (38 aa).

This sequence belongs to the bacterial ribosomal protein bL36 family.

The protein is Large ribosomal subunit protein bL36 of Chlorobaculum parvum (strain DSM 263 / NCIMB 8327) (Chlorobium vibrioforme subsp. thiosulfatophilum).